A 304-amino-acid chain; its full sequence is Ribosomal protein L11 methyltransferase (304 aa).

S-adenosyl-L-methionine-binding residues include T147, G168, D190, and N238.

This sequence belongs to the methyltransferase superfamily. PrmA family.

Its subcellular location is the cytoplasm. The enzyme catalyses L-lysyl-[protein] + 3 S-adenosyl-L-methionine = N(6),N(6),N(6)-trimethyl-L-lysyl-[protein] + 3 S-adenosyl-L-homocysteine + 3 H(+). Its function is as follows. Methylates ribosomal protein L11. The protein is Ribosomal protein L11 methyltransferase of Prochlorococcus marinus (strain SARG / CCMP1375 / SS120).